The chain runs to 362 residues: Carbamoyl phosphate synthase pyrimidine-specific small chain (362 aa).

The segment at 1-168 is CPSase; sequence MKRQLILEDG…TRDPYHVPGP (168 aa). 3 residues coordinate L-glutamine: S45, G219, and G221. One can recognise a Glutamine amidotransferase type-1 domain in the interval 171 to 358; it reads RVVLVDYGMK…IKLMESNKHR (188 aa). C246 acts as the Nucleophile in catalysis. L-glutamine-binding residues include L247, Q250, N288, G290, and Y291. Residues H331 and E333 contribute to the active site.

This sequence belongs to the CarA family. In terms of assembly, composed of two chains; the small (or glutamine) chain promotes the hydrolysis of glutamine to ammonia, which is used by the large (or ammonia) chain to synthesize carbamoyl phosphate. Tetramer of heterodimers (alpha,beta)4.

It carries out the reaction hydrogencarbonate + L-glutamine + 2 ATP + H2O = carbamoyl phosphate + L-glutamate + 2 ADP + phosphate + 2 H(+). It catalyses the reaction L-glutamine + H2O = L-glutamate + NH4(+). It functions in the pathway pyrimidine metabolism; UMP biosynthesis via de novo pathway; (S)-dihydroorotate from bicarbonate: step 1/3. In terms of biological role, small subunit of the glutamine-dependent carbamoyl phosphate synthetase (CPSase). CPSase catalyzes the formation of carbamoyl phosphate from the ammonia moiety of glutamine, carbonate, and phosphate donated by ATP, constituting the first step of the biosynthetic pathway leading to pyrimidine nucleotides. The small subunit (glutamine amidotransferase) binds and cleaves glutamine to supply the large subunit with the substrate ammonia. The polypeptide is Carbamoyl phosphate synthase pyrimidine-specific small chain (Halalkalibacterium halodurans (strain ATCC BAA-125 / DSM 18197 / FERM 7344 / JCM 9153 / C-125) (Bacillus halodurans)).